The chain runs to 481 residues: Pentatricopeptide repeat-containing protein At2g48000 (481 aa).

PPR repeat units follow at residues Thr-147 to Pro-181, Ser-187 to Pro-221, Asp-222 to Pro-256, Thr-257 to His-287, Glu-292 to Lys-324, Lys-328 to Ile-362, Thr-364 to Met-398, Ser-399 to Arg-433, and Ser-434 to Phe-469.

This sequence belongs to the PPR family. P subfamily.

The protein is Pentatricopeptide repeat-containing protein At2g48000 of Arabidopsis thaliana (Mouse-ear cress).